A 126-amino-acid chain; its full sequence is Putative regulator AldR (126 aa).

Belongs to the RutC family.

Implicated in the regulation of isoleucine biosynthesis. This is Putative regulator AldR (aldR) from Lactococcus lactis subsp. lactis (strain IL1403) (Streptococcus lactis).